The following is a 183-amino-acid chain: Peptidoglycan recognition protein 1 (183 aa).

The first 17 residues, 1 to 17 (MLFAWAPFPALLGLADS), serve as a signal peptide directing secretion. Cystine bridges form between Cys18/Cys142, Cys34/Cys79, and Cys55/Cys61. An N-acetylmuramoyl-L-alanine amidase domain is found at 40–168 (KPVRYVVISH…RDVQSTLSPG (129 aa)).

This sequence belongs to the N-acetylmuramoyl-L-alanine amidase 2 family. As to expression, expressed in all regions of the brain.

It localises to the secreted. The protein localises to the cytoplasmic granule. Functionally, innate immunity protein that plays several important functions in antimicrobial and antitumor defense systems. Acts as a pattern receptor that binds to murein peptidoglycans (PGN) of Gram-positive bacteria and thus provides bactericidal activity. Forms an equimolar complex with heat shock protein HSPA1A and induces programmed cell death through apoptosis and necroptosis in tumor cell lines by activating the TNFR1 receptor on the target cell membrane. In addition, acts in complex with the Ca(2+)-binding protein S100A4 as a chemoattractant able to induce lymphocyte movement. Mechanistically, this complex acts as a ligand of the chemotactic receptors CCR5 and CXCR3 which are present on the cells of the immune system. Promotes also the activation of lymphocytes that become able to kill virus-infected cells as well as tumor cells by modulating the spectrum of their target-cell specificity. Induction of cytotoxicity on monocyte surface requires interaction with TREM1 receptor. This is Peptidoglycan recognition protein 1 (Pglyrp1) from Rattus norvegicus (Rat).